The sequence spans 187 residues: Pyridoxal 5'-phosphate synthase subunit PdxT (187 aa).

47 to 49 is an L-glutamine binding site; sequence GES. C76 (nucleophile) is an active-site residue. L-glutamine contacts are provided by residues R102 and 128-129; that span reads IR. Residues H165 and E167 each act as charge relay system in the active site.

It belongs to the glutaminase PdxT/SNO family. In the presence of PdxS, forms a dodecamer of heterodimers. Only shows activity in the heterodimer.

It catalyses the reaction aldehydo-D-ribose 5-phosphate + D-glyceraldehyde 3-phosphate + L-glutamine = pyridoxal 5'-phosphate + L-glutamate + phosphate + 3 H2O + H(+). The enzyme catalyses L-glutamine + H2O = L-glutamate + NH4(+). The protein operates within cofactor biosynthesis; pyridoxal 5'-phosphate biosynthesis. In terms of biological role, catalyzes the hydrolysis of glutamine to glutamate and ammonia as part of the biosynthesis of pyridoxal 5'-phosphate. The resulting ammonia molecule is channeled to the active site of PdxS. The polypeptide is Pyridoxal 5'-phosphate synthase subunit PdxT (Methanococcus maripaludis (strain C5 / ATCC BAA-1333)).